The primary structure comprises 226 residues: V-type proton ATPase subunit E 2 (226 aa).

The protein belongs to the V-ATPase E subunit family. As to quaternary structure, V-ATPase is a heteromultimeric enzyme made up of two complexes: the ATP-hydrolytic V1 complex and the proton translocation V0 complex. The V1 complex consists of three catalytic AB heterodimers that form a heterohexamer, three peripheral stalks each consisting of EG heterodimers, one central rotor including subunits D and F, and the regulatory subunits C and H. The proton translocation complex V0 consists of the proton transport subunit a, a ring of proteolipid subunits c9c'', rotary subunit d, subunits e and f, and the accessory subunits ATP6AP1/Ac45 and ATP6AP2/PRR.

Its function is as follows. Subunit of the V1 complex of vacuolar(H+)-ATPase (V-ATPase), a multisubunit enzyme composed of a peripheral complex (V1) that hydrolyzes ATP and a membrane integral complex (V0) that translocates protons. V-ATPase is responsible for acidifying and maintaining the pH of intracellular compartments and in some cell types, is targeted to the plasma membrane, where it is responsible for acidifying the extracellular environment. This Bos taurus (Bovine) protein is V-type proton ATPase subunit E 2 (ATP6V1E2).